The following is a 462-amino-acid chain: Cytochrome P450 20A1 (462 aa).

A helical transmembrane segment spans residues 4 to 24 (FAIFAVTFLLALVGAVLYLYP). Residue Cys-409 participates in heme binding.

It belongs to the cytochrome P450 family. Requires heme as cofactor.

The protein resides in the membrane. The chain is Cytochrome P450 20A1 (CYP20A1) from Homo sapiens (Human).